A 160-amino-acid polypeptide reads, in one-letter code: Transcription elongation factor GreA (160 aa).

Positions 11-38 (YDRLMKELERLKSERPAIIQAIKEAREE) form a coiled coil.

It belongs to the GreA/GreB family.

Its function is as follows. Necessary for efficient RNA polymerase transcription elongation past template-encoded arresting sites. The arresting sites in DNA have the property of trapping a certain fraction of elongating RNA polymerases that pass through, resulting in locked ternary complexes. Cleavage of the nascent transcript by cleavage factors such as GreA or GreB allows the resumption of elongation from the new 3'terminus. GreA releases sequences of 2 to 3 nucleotides. This Nitratidesulfovibrio vulgaris (strain DSM 19637 / Miyazaki F) (Desulfovibrio vulgaris) protein is Transcription elongation factor GreA.